We begin with the raw amino-acid sequence, 1242 residues long: Phosphorylase b kinase regulatory subunit alpha, skeletal muscle isoform (1242 aa).

9 positions are modified to phosphoserine: Ser-630, Ser-731, Ser-737, Ser-740, Ser-760, Ser-813, Ser-974, Ser-983, and Ser-987. A calmodulin-binding region spans residues 812-842 (LSELYVKVGEIRHWGLIRYISGILRKKVEAL). Ser-1009 carries the post-translational modification Phosphoserine; by autocatalysis. Ser-1020 carries the post-translational modification Phosphoserine; by PKA. Ser-1022 and Ser-1025 each carry phosphoserine. The calmodulin-binding stretch occupies residues 1065–1105 (SKDSRQGQWQRRRRLDGALNRVPIGFYQKVWKILQKCHGLS). The residue at position 1132 (Ser-1132) is a Phosphoserine. A lipid anchor (S-farnesyl cysteine) is attached at Cys-1239.

It belongs to the phosphorylase b kinase regulatory chain family. In terms of assembly, hexadecamer of 4 heterotetramers, each composed of alpha, beta, gamma, and delta subunits. Alpha (PHKA1 or PHKA2) and beta (PHKB) are regulatory subunits, gamma (PHKG1 or PHKG2) is the catalytic subunit, and delta is calmodulin. Post-translationally, although the final Cys may be farnesylated, the terminal tripeptide is probably not removed, and the C-terminus is not methylated.

Its subcellular location is the cell membrane. Its pathway is glycan biosynthesis; glycogen metabolism. By phosphorylation of various serine residues and by calcium. Its function is as follows. Phosphorylase b kinase catalyzes the phosphorylation of serine in certain substrates, including troponin I. The alpha chain may bind calmodulin. The chain is Phosphorylase b kinase regulatory subunit alpha, skeletal muscle isoform (Phka1) from Rattus norvegicus (Rat).